A 140-amino-acid polypeptide reads, in one-letter code: ATP synthase epsilon chain (140 aa).

This sequence belongs to the ATPase epsilon chain family. As to quaternary structure, F-type ATPases have 2 components, CF(1) - the catalytic core - and CF(0) - the membrane proton channel. CF(1) has five subunits: alpha(3), beta(3), gamma(1), delta(1), epsilon(1). CF(0) has three main subunits: a, b and c.

The protein localises to the cell inner membrane. Produces ATP from ADP in the presence of a proton gradient across the membrane. In Nitrosococcus oceani (strain ATCC 19707 / BCRC 17464 / JCM 30415 / NCIMB 11848 / C-107), this protein is ATP synthase epsilon chain.